We begin with the raw amino-acid sequence, 737 residues long: MPGKLLWGDIMELEAPLEESESQKKERQKSDRRKSRHHYDSDEKSETRENGVTDDLDAPKAKKSKMKEKLNGDTEEGFNRLSDEFSKSHKSRRKDLPNGDIDEYEKKSKRVSSLDTSTHKSSDNKLEETLTREQKEGAFSNFPISEETIKLLKGRGVTYLFPIQVKTFGPVYEGKDLIAQARTGTGKTFSFAIPLIERLQRNQETIKKSRSPKVLVLAPTRELANQVAKDFKDITRKLSVACFYGGTSYQSQINHIRNGIDILVGTPGRIKDHLQSGRLDLSKLRHVVLDEVDQMLDLGFAEQVEDIIHESYKTDSEDNPQTLLFSATCPQWVYKVAKKYMKSRYEQVDLVGKMTQKAATTVEHLAIQCHWSQRPAVIGDVLQVYSGSEGRAIIFCETKKNVTEMAMNPHIKQNAQCLHGDIAQSQREITLKGFREGSFKVLVATNVAARGLDIPEVDLVIQSSPPQDVESYIHRSGRTGRAGRTGICICFYQPRERGQLRYVEQKAGITFKRVGVPSTMDLVKSKSMDAIRSLASVSYAAVDFFRPSAQRLIEEKGAVDALAAALAHISGASSFEPRSLITSDKGFVTMTLESLEEIQDVSCAWKELNRKLSSNAVSQITRMCLLKGNMGVCFDVPTTESERLQAEWHDSDWILSVPAKLPEIEEYYDGNTSSNSRQRSGWSSGRSGRSGRSGGRSGGRSGRQSRQGSRSGSRQDGRRRSGNRNRSRSGGHKRSFD.

Positions Met-1–Thr-131 are disordered. Acidic residues predominate over residues Met-11–Ser-20. Basic and acidic residues-rich tracts occupy residues His-38–Gly-51, Lys-67–Lys-87, and Ser-117–Thr-131. A phosphoserine mark is found at Ser-41, Ser-82, Ser-86, Ser-121, and Ser-122. A Glycyl lysine isopeptide (Lys-Gly) (interchain with G-Cter in SUMO2) cross-link involves residue Lys-125. Positions Gly-137–Val-165 match the Q motif motif. The Helicase ATP-binding domain maps to Phe-168–Gln-347. Ala-181–Thr-188 contributes to the ATP binding site. Thr-247 is subject to Phosphothreonine. The DEVD box signature appears at Asp-290–Asp-293. The Helicase C-terminal domain occupies Asp-380 to Lys-524. Ser-518 carries the phosphoserine modification. Positions Tyr-668 to Asp-737 are disordered. Over residues Ser-673–Ser-687 the composition is skewed to low complexity. Over residues Gly-691–Ser-701 the composition is skewed to gly residues. Residues Gly-702–Gly-712 show a composition bias toward low complexity. Residues Arg-720–Asp-737 are compositionally biased toward basic residues.

Belongs to the DEAD box helicase family. DDX21/DDX50 subfamily. In terms of assembly, interacts with C1QBP. Interacts with the ubiquitin ligase CTLH complex through GID4. Interacts with TICAM1. In terms of tissue distribution, highest expression in skeletal muscle, liver, heart, placenta, and kidney.

The protein resides in the nucleus. It is found in the nucleolus. The protein localises to the cytoplasm. It carries out the reaction ATP + H2O = ADP + phosphate + H(+). In terms of biological role, ATP-dependent RNA helicase that may play a role in various aspects of RNA metabolism including pre-mRNA splicing or ribosomal RNA production. Also acts as a viral restriction factor and promotes the activation of the NF-kappa-B and IRF3 signaling pathways following its stimulation with viral RNA or infection with RNA and DNA viruses. For instance, decreases vaccinia virus, herpes simplex virus, Zika virus or dengue virus replication during the early stage of infection. Mechanistically, acts via the adapter TICAM1 and independently of the DDX1-DDX21-DHX36 helicase complex to induce the production of interferon-beta. This is ATP-dependent RNA helicase DDX50 (DDX50) from Homo sapiens (Human).